Reading from the N-terminus, the 137-residue chain is Fibroblast growth factor 2 (137 aa).

N27 lines the heparin pocket. Y73 bears the Phosphotyrosine; by TEC mark. K86 participates in a covalent cross-link: Glycyl lysine isopeptide (Lys-Gly) (interchain with G-Cter in SUMO1). Residues 119 to 135 form a heparin-binding region; the sequence is KRTGQYKLGSKTGPGQK.

This sequence belongs to the heparin-binding growth factors family. In terms of assembly, monomer. Homodimer. Interacts with FGFR1, FGFR2, FGFR3 and FGFR4. Affinity between fibroblast growth factors (FGFs) and their receptors is increased by heparan sulfate glycosaminoglycans that function as coreceptors. Interacts with CSPG4, FGFBP1 and TEC. Found in a complex with FGFBP1, FGF1 and FGF2. Interacts with FGFBP3. Interacts with integrin ITGAV:ITGB3; the interaction is required for FGF2 signaling. Interacts with SNORC (via the extracellular domain). Interacts with glypican GPC3. In terms of processing, phosphorylation at Tyr-73 regulates FGF2 unconventional secretion.

The protein localises to the secreted. The protein resides in the nucleus. Functionally, acts as a ligand for FGFR1, FGFR2, FGFR3 and FGFR4. Also acts as an integrin ligand which is required for FGF2 signaling. Binds to integrin ITGAV:ITGB3. Plays an important role in the regulation of cell survival, cell division, cell differentiation and cell migration. Functions as a potent mitogen in vitro. Can induce angiogenesis. Mediates phosphorylation of ERK1/2 and thereby promotes retinal lens fiber differentiation. The chain is Fibroblast growth factor 2 (FGF2) from Oryctolagus cuniculus (Rabbit).